Here is a 595-residue protein sequence, read N- to C-terminus: Aspartate--tRNA(Asp/Asn) ligase (595 aa).

E174 contacts L-aspartate. The tract at residues 198–201 (QLFK) is aspartate. R220 contacts L-aspartate. ATP is bound by residues 220–222 (RDE) and Q229. Residue H456 coordinates L-aspartate. E486 serves as a coordination point for ATP. R493 contributes to the L-aspartate binding site. Residue 538-541 (GFDR) participates in ATP binding.

Belongs to the class-II aminoacyl-tRNA synthetase family. Type 1 subfamily. As to quaternary structure, homodimer.

The protein localises to the cytoplasm. It carries out the reaction tRNA(Asx) + L-aspartate + ATP = L-aspartyl-tRNA(Asx) + AMP + diphosphate. Functionally, aspartyl-tRNA synthetase with relaxed tRNA specificity since it is able to aspartylate not only its cognate tRNA(Asp) but also tRNA(Asn). Reaction proceeds in two steps: L-aspartate is first activated by ATP to form Asp-AMP and then transferred to the acceptor end of tRNA(Asp/Asn). This chain is Aspartate--tRNA(Asp/Asn) ligase, found in Gloeobacter violaceus (strain ATCC 29082 / PCC 7421).